The chain runs to 417 residues: Neuropeptide FF receptor 2 (417 aa).

Residues 1 to 45 (MGKRWDSNSSGSWDHIWSGNDTQHPWYSDINITYMNYYLHQPHVT) lie on the Extracellular side of the membrane. 3 N-linked (GlcNAc...) asparagine glycosylation sites follow: Asn-8, Asn-20, and Asn-31. Residues 46–66 (AVFISSYFLIFFLCMVGNTVV) form a helical membrane-spanning segment. Residues 67–82 (CFVVIRNRYMHTVTNF) lie on the Cytoplasmic side of the membrane. A helical membrane pass occupies residues 83–103 (FIFNLAISDLLVGIFCMPITL). The Extracellular segment spans residues 104-119 (LDNIIAGWPFGSSMCK). A disulfide bridge links Cys-118 with Cys-206. Residues 120–140 (ISGLVQGISVAASVFTLVAIA) form a helical membrane-spanning segment. Topologically, residues 141–160 (VDRFRCVVYPFKPKLTVKTA) are cytoplasmic. Residues 161–181 (FVMIVIIWGLAITIMTPSAIM) traverse the membrane as a helical segment. Over 182–217 (LHVQEEKYYRVRLSSHNKTSTVYWCREDWPNQEMRR) the chain is Extracellular. Asn-198 is a glycosylation site (N-linked (GlcNAc...) asparagine). Residues 218-238 (IYTTVLFATIYLAPLSLIVIM) form a helical membrane-spanning segment. Topologically, residues 239–274 (YARIGASLFKTSAHSTGKQRLEQWHVSKKKQKVIKM) are cytoplasmic. The chain crosses the membrane as a helical span at residues 275–295 (LLTVALLFILSWLPLWTLMML). The Extracellular segment spans residues 296-310 (SDYADLSPNKLRVIN). A helical transmembrane segment spans residues 311–331 (IYVYPFAHWLAFCNSSVNPII). Residues 332-417 (YGFFNENFRS…TGEATNSTET (86 aa)) lie on the Cytoplasmic side of the membrane. The interval 378–417 (HEPASQNPSGENLGCRKSADNPTQESLMEETGEATNSTET) is disordered.

This sequence belongs to the G-protein coupled receptor 1 family.

The protein localises to the cell membrane. In terms of biological role, receptor for NPAF (A-18-F-amide) and NPFF (F-8-F-amide) neuropeptides, also known as morphine-modulating peptides. Can also be activated by a variety of naturally occurring or synthetic FMRF-amide like ligands. This receptor mediates its action by association with G proteins that activate a phosphatidylinositol-calcium second messenger system. This is Neuropeptide FF receptor 2 (Npffr2) from Rattus norvegicus (Rat).